The chain runs to 78 residues: Acyl carrier protein (78 aa).

Positions 2–77 (SDIADRVKKI…DAIKFLEKNS (76 aa)) constitute a Carrier domain. S37 bears the O-(pantetheine 4'-phosphoryl)serine mark.

The protein belongs to the acyl carrier protein (ACP) family. 4'-phosphopantetheine is transferred from CoA to a specific serine of apo-ACP by AcpS. This modification is essential for activity because fatty acids are bound in thioester linkage to the sulfhydryl of the prosthetic group.

It localises to the cytoplasm. It participates in lipid metabolism; fatty acid biosynthesis. Carrier of the growing fatty acid chain in fatty acid biosynthesis. The chain is Acyl carrier protein from Methylobacterium sp. (strain 4-46).